Consider the following 236-residue polypeptide: Bidirectional sugar transporter SWEET2 (236 aa).

Topologically, residues 1–15 are extracellular; the sequence is MDVFAFNASLSMCKD. Residue Asn7 is glycosylated (N-linked (GlcNAc...) asparagine). A helical membrane pass occupies residues 16–36; sequence VAGIAGNIFAFGLFVSPMPTF. One can recognise a MtN3/slv 1 domain in the interval 18–103; sequence GIAGNIFAFG…ILFIMHTDKK (86 aa). Over 37 to 50 the chain is Cytoplasmic; sequence RRIMRNKSTEQFSG. The chain crosses the membrane as a helical span at residues 51-71; sequence LPYIYALLNCLICLWYGTPFI. The Extracellular segment spans residues 72-76; that stretch reads SHSNA. A helical membrane pass occupies residues 77–97; it reads MLMTVNSVGATFQLCYIILFI. The Cytoplasmic portion of the chain corresponds to 98 to 108; that stretch reads MHTDKKNKMKM. The helical transmembrane segment at 109–129 threads the bilayer; that stretch reads LGLLFVVFAVVGVIVAGSLQI. The Extracellular portion of the chain corresponds to 130 to 137; it reads PDQLTRWY. Residues 138-158 form a helical membrane-spanning segment; that stretch reads FVGFLSCGSLVSMFASPLFVI. One can recognise a MtN3/slv 2 domain in the interval 138–221; it reads FVGFLSCGSL…LALYCYYHRN (84 aa). Topologically, residues 159–170 are cytoplasmic; it reads NLVIRTKSVEFM. A helical membrane pass occupies residues 171 to 191; sequence PFYLSLSTFLMSASFLLYGLF. Over 192–194 the chain is Extracellular; that stretch reads NSD. A helical transmembrane segment spans residues 195–215; that stretch reads AFVYTPNGIGTILGIVQLALY. Topologically, residues 216-236 are cytoplasmic; sequence CYYHRNSIEEETKEPLIVSYV.

This sequence belongs to the SWEET sugar transporter family. In terms of assembly, forms heterooligomers with SWEET17.

It localises to the cell membrane. Mediates both low-affinity uptake and efflux of sugar across the plasma membrane. In Arabidopsis thaliana (Mouse-ear cress), this protein is Bidirectional sugar transporter SWEET2.